The primary structure comprises 298 residues: uncharacterized protein (298 aa).

Residues 194 to 295 (KRLNTALIAI…QLSPSQYRKS (102 aa)) form the HTH araC/xylS-type domain. 2 consecutive DNA-binding regions (H-T-H motif) follow at residues 214-235 (EQLAELATMSRANFIRIFQQHI) and 262-285 (VLAIALEVGYQSEAHFCKVFKNYY).

This is an uncharacterized protein from Haemophilus influenzae (strain ATCC 51907 / DSM 11121 / KW20 / Rd).